The chain runs to 363 residues: UDP-N-acetylglucosamine--N-acetylmuramyl-(pentapeptide) pyrophosphoryl-undecaprenol N-acetylglucosamine transferase (363 aa).

UDP-N-acetyl-alpha-D-glucosamine contacts are provided by residues 15–17 (TGG), asparagine 127, arginine 169, serine 197, isoleucine 251, 270–275 (ALTVSE), and glutamine 296.

The protein belongs to the glycosyltransferase 28 family. MurG subfamily.

It localises to the cell inner membrane. It catalyses the reaction di-trans,octa-cis-undecaprenyl diphospho-N-acetyl-alpha-D-muramoyl-L-alanyl-D-glutamyl-meso-2,6-diaminopimeloyl-D-alanyl-D-alanine + UDP-N-acetyl-alpha-D-glucosamine = di-trans,octa-cis-undecaprenyl diphospho-[N-acetyl-alpha-D-glucosaminyl-(1-&gt;4)]-N-acetyl-alpha-D-muramoyl-L-alanyl-D-glutamyl-meso-2,6-diaminopimeloyl-D-alanyl-D-alanine + UDP + H(+). It functions in the pathway cell wall biogenesis; peptidoglycan biosynthesis. Cell wall formation. Catalyzes the transfer of a GlcNAc subunit on undecaprenyl-pyrophosphoryl-MurNAc-pentapeptide (lipid intermediate I) to form undecaprenyl-pyrophosphoryl-MurNAc-(pentapeptide)GlcNAc (lipid intermediate II). This chain is UDP-N-acetylglucosamine--N-acetylmuramyl-(pentapeptide) pyrophosphoryl-undecaprenol N-acetylglucosamine transferase, found in Dichelobacter nodosus (strain VCS1703A).